Consider the following 159-residue polypeptide: Keratin-associated protein 9-8 (159 aa).

Tandem repeats lie at residues 8–12, 13–17, 32–36, 37–41, 46–50, 51–55, 56–60, 65–69, 70–74, 75–79, 80–84, 129–133, 134–138, 139–142, and 153–157. Residues 8-157 form a 15 X 5 AA repeats of C-C-[RQVSGE]-[SPSNQ]-[TASPI] region; that stretch reads CCQPTCCRTT…TCVSSCCQPS (150 aa).

It belongs to the KRTAP type 9 family. In terms of assembly, interacts with hair keratins.

In the hair cortex, hair keratin intermediate filaments are embedded in an interfilamentous matrix, consisting of hair keratin-associated proteins (KRTAP), which are essential for the formation of a rigid and resistant hair shaft through their extensive disulfide bond cross-linking with abundant cysteine residues of hair keratins. The matrix proteins include the high-sulfur and high-glycine-tyrosine keratins. The protein is Keratin-associated protein 9-8 (KRTAP9-8) of Homo sapiens (Human).